The following is a 41-amino-acid chain: Replication-associated protein (41 aa).

Involved in viral RNA replication. The chain is Replication-associated protein from Potato leafroll virus (strain Potato/Scotland/strain 1/1984) (PLrV).